A 93-amino-acid chain; its full sequence is Insertion element ISR1 uncharacterized 11 kDa protein A1 (93 aa).

Disordered regions lie at residues 14–33 (RRARTTRSARPAEGPGQERR) and 68–93 (RRRAPQASDGHAATVTCRWRPTSAGR).

This Rhizobium sp protein is Insertion element ISR1 uncharacterized 11 kDa protein A1.